The chain runs to 317 residues: Spermidine synthase 2 (317 aa).

A PABS domain is found at 27-264 (PGWFSEISPL…GMIGFMLCST (238 aa)). Q58 serves as a coordination point for S-adenosyl 3-(methylsulfanyl)propylamine. Residue Y88 participates in putrescine binding. Residues Q89, D113, E133, 164–165 (DG), and D183 each bind S-adenosyl 3-(methylsulfanyl)propylamine. Catalysis depends on D183, which acts as the Proton acceptor. Residues 183-186 (DSSD) and Y252 each bind putrescine.

Belongs to the spermidine/spermine synthase family.

The catalysed reaction is S-adenosyl 3-(methylsulfanyl)propylamine + putrescine = S-methyl-5'-thioadenosine + spermidine + H(+). The protein operates within amine and polyamine biosynthesis; spermidine biosynthesis; spermidine from putrescine: step 1/1. This chain is Spermidine synthase 2, found in Datura stramonium (Jimsonweed).